Here is a 2208-residue protein sequence, read N- to C-terminus: RNA-directed RNA polymerase L (2208 aa).

The tract at residues 26–284 (KEALLSQVEV…SHAGTTVPEC (259 aa)) is endonuclease. Glu-51, Asp-89, and Glu-102 together coordinate Mn(2+). Lys-115 is an active-site residue. The 199-residue stretch at 1172–1370 (CDMKMAVNNG…FLSSKLNKFV (199 aa)) folds into the RdRp catalytic domain. Asp-1330 serves as a coordination point for Mg(2+).

This sequence belongs to the Bunyavirales RNA polymerase family. As to quaternary structure, homomultimer; the oligomeric structure is essential for the polymerase activity. Interacts with nucleoprotein N. Interacts with protein Z; this interaction inhibits viral transcription and replication, Z partially blocks the product exit tunnel for the releasing nascent RNA product. Requires Mn(2+) as cofactor. The cofactor is Mg(2+).

Its subcellular location is the virion. It localises to the host cytoplasm. The enzyme catalyses RNA(n) + a ribonucleoside 5'-triphosphate = RNA(n+1) + diphosphate. RNA-dependent RNA polymerase, which is responsible for the replication and transcription of the viral RNA genome using antigenomic RNA as an intermediate. During transcription, synthesizes subgenomic RNAs and assures their capping by a cap-snatching mechanism, which involves the endonuclease activity cleaving the host capped pre-mRNAs. These short capped RNAs are then used as primers for viral transcription. The 3'-end of subgenomic mRNAs molecules are heterogeneous and not polyadenylated. The replicase function is to direct synthesis of antigenomic and genomic RNA which are encapsidated and non capped. As a consequence of the use of the same enzyme for both transcription and replication, these mechanisms need to be well coordinated. These processes may be regulated by proteins N and Z in a dose-dependent manner. Z protein inhibits the viral polymerase L und thus the viral transcription and RNA synthesis. This Hylaeamys megacephalus (Large-headed rice rat) protein is RNA-directed RNA polymerase L.